The following is a 168-amino-acid chain: Peptide deformylase (168 aa).

Residues Cys-92 and His-134 each coordinate Fe cation. Residue Glu-135 is part of the active site. Residue His-138 coordinates Fe cation.

It belongs to the polypeptide deformylase family. It depends on Fe(2+) as a cofactor.

It catalyses the reaction N-terminal N-formyl-L-methionyl-[peptide] + H2O = N-terminal L-methionyl-[peptide] + formate. Removes the formyl group from the N-terminal Met of newly synthesized proteins. Requires at least a dipeptide for an efficient rate of reaction. N-terminal L-methionine is a prerequisite for activity but the enzyme has broad specificity at other positions. In Hahella chejuensis (strain KCTC 2396), this protein is Peptide deformylase.